We begin with the raw amino-acid sequence, 161 residues long: Anaerobic nitrite reductase GLB1 (161 aa).

One can recognise a Globin domain in the interval Val9–Lys157. The Homodimerization motif lies at Glu42–Ser46. Heme b is bound by residues Ser52, Lys66, His70, Arg100, and His105. The Homodimerization signature appears at Asn112–Glu123.

The protein belongs to the plant globin family. As to quaternary structure, homodimer. It depends on heme b as a cofactor. Root specific.

Its subcellular location is the cytoplasm. The protein resides in the nucleus. It catalyses the reaction Fe(III)-heme b-[protein] + nitric oxide + H2O = Fe(II)-heme b-[protein] + nitrite + 2 H(+). Functionally, phytoglobin that reduces nitrite to nitric oxide (NO) under anoxic conditions (e.g. during flooding or in waterlogged soil) and upon root nodulation. Required for general plant development and during nodulation, especially for the onset of symbiosis. Monitors nitric oxide (NO) levels during early phase of the nitrogen-fixing symbiosis and buffers oxygen in functioning nodules. May not function as an oxygen storage or transport protein. Has an unusually high affinity for O(2) through a hexacoordinate heme iron because of a very low dissociation constant. This is Anaerobic nitrite reductase GLB1 (GLB1) from Trema tomentosum (Peach-leaf poison-bush).